Here is a 439-residue protein sequence, read N- to C-terminus: tRNA-2-methylthio-N(6)-dimethylallyladenosine synthase (439 aa).

The region spanning 2 to 116 (LKVYIETMGC…ISQVIHKEKA (115 aa)) is the MTTase N-terminal domain. Cysteine 11, cysteine 47, cysteine 79, cysteine 149, cysteine 153, and cysteine 156 together coordinate [4Fe-4S] cluster. One can recognise a Radical SAM core domain in the interval 135–368 (KKAEVRSLLN…QNRHKEILEE (234 aa)). In terms of domain architecture, TRAM spans 371–437 (RLEVGKTHVV…KGRLMATTKN (67 aa)).

This sequence belongs to the methylthiotransferase family. MiaB subfamily. In terms of assembly, monomer. [4Fe-4S] cluster is required as a cofactor.

The protein resides in the cytoplasm. The enzyme catalyses N(6)-dimethylallyladenosine(37) in tRNA + (sulfur carrier)-SH + AH2 + 2 S-adenosyl-L-methionine = 2-methylsulfanyl-N(6)-dimethylallyladenosine(37) in tRNA + (sulfur carrier)-H + 5'-deoxyadenosine + L-methionine + A + S-adenosyl-L-homocysteine + 2 H(+). Its function is as follows. Catalyzes the methylthiolation of N6-(dimethylallyl)adenosine (i(6)A), leading to the formation of 2-methylthio-N6-(dimethylallyl)adenosine (ms(2)i(6)A) at position 37 in tRNAs that read codons beginning with uridine. The sequence is that of tRNA-2-methylthio-N(6)-dimethylallyladenosine synthase from Helicobacter acinonychis (strain Sheeba).